A 155-amino-acid polypeptide reads, in one-letter code: UPF0178 protein ACICU_02858 (155 aa).

The interval 120-155 (GAGVQTGGPPPISERDKREFSSALDQTILKQKRKTA) is disordered.

The protein belongs to the UPF0178 family.

This is UPF0178 protein ACICU_02858 from Acinetobacter baumannii (strain ACICU).